The primary structure comprises 140 residues: Phosphoribosyl-AMP cyclohydrolase (140 aa).

A Mg(2+)-binding site is contributed by aspartate 78. Cysteine 79 lines the Zn(2+) pocket. 2 residues coordinate Mg(2+): aspartate 80 and aspartate 82. Residues cysteine 96 and cysteine 103 each contribute to the Zn(2+) site.

The protein belongs to the PRA-CH family. Homodimer. Mg(2+) is required as a cofactor. Zn(2+) serves as cofactor.

The protein localises to the cytoplasm. The catalysed reaction is 1-(5-phospho-beta-D-ribosyl)-5'-AMP + H2O = 1-(5-phospho-beta-D-ribosyl)-5-[(5-phospho-beta-D-ribosylamino)methylideneamino]imidazole-4-carboxamide. The protein operates within amino-acid biosynthesis; L-histidine biosynthesis; L-histidine from 5-phospho-alpha-D-ribose 1-diphosphate: step 3/9. Catalyzes the hydrolysis of the adenine ring of phosphoribosyl-AMP. The sequence is that of Phosphoribosyl-AMP cyclohydrolase from Ralstonia pickettii (strain 12J).